We begin with the raw amino-acid sequence, 369 residues long: Glutamate 5-kinase (369 aa).

Position 8 (lysine 8) interacts with ATP. Serine 49, aspartate 136, and asparagine 148 together coordinate substrate. Residues 168 to 169 and 211 to 217 contribute to the ATP site; these read TD and TGGMATK. Residues 276 to 354 form the PUA domain; that stretch reads TGKLYLDSGA…DEISQILGYG (79 aa).

The protein belongs to the glutamate 5-kinase family.

It localises to the cytoplasm. The catalysed reaction is L-glutamate + ATP = L-glutamyl 5-phosphate + ADP. The protein operates within amino-acid biosynthesis; L-proline biosynthesis; L-glutamate 5-semialdehyde from L-glutamate: step 1/2. Catalyzes the transfer of a phosphate group to glutamate to form L-glutamate 5-phosphate. The chain is Glutamate 5-kinase from Rippkaea orientalis (strain PCC 8801 / RF-1) (Cyanothece sp. (strain PCC 8801)).